Here is a 408-residue protein sequence, read N- to C-terminus: Multidrug resistance protein MdtG (408 aa).

10 consecutive transmembrane segments (helical) span residues 16-36, 58-78, 92-112, 115-135, 146-166, 173-193, 224-244, 256-276, 290-310, and 378-398; these read LIVA…VMPF, IVFS…GGLA, LGMG…QFLI, ALLG…ATQV, TLST…GLLA, PVFF…LFCI, LFVT…ILTL, VAFI…LSAP, ILIT…YVQT, and AVFL…WNSL.

The protein belongs to the major facilitator superfamily. DHA1 family. MdtG (TC 2.A.1.2.20) subfamily.

It localises to the cell inner membrane. Confers resistance to fosfomycin and deoxycholate. The sequence is that of Multidrug resistance protein MdtG from Escherichia coli O17:K52:H18 (strain UMN026 / ExPEC).